The following is a 298-amino-acid chain: Ribosomal RNA processing protein 36 homolog (298 aa).

Positions 1 to 131 are disordered; it reads MKPDIIKKRR…SDAPVEMTAM (131 aa). Residues 14-56 show a composition bias toward acidic residues; the sequence is SDDEDEYNEEDEMYEDDNNNYEEDEDDDDDDDEDDEDDDENEE. Composition is skewed to polar residues over residues 61–70 and 83–92; these read QQLSNVSFSS and LNLNTITKNL. Coiled-coil stretches lie at residues 88 to 112 and 196 to 228; these read ITKNLQQQKSFKKEEQQEKEEMNSK and RERDQLYKKIQSKKSQLKTQQLKDQKRETKNKL. The span at 98–111 shows a compositional bias: basic and acidic residues; that stretch reads FKKEEQQEKEEMNS. The interval 279–298 is disordered; that stretch reads ISSKEKTFLPQRRSFDQDEN.

The protein belongs to the RRP36 family.

The protein resides in the nucleus. The protein localises to the nucleolus. In terms of biological role, involved in the early processing steps of the pre-rRNA in the maturation pathway leading to the 18S rRNA. The polypeptide is Ribosomal RNA processing protein 36 homolog (Dictyostelium discoideum (Social amoeba)).